Here is a 299-residue protein sequence, read N- to C-terminus: Tryptophan prenyltransferase ComQ (299 aa).

Mg(2+)-binding residues include Asp67 and Asp71.

It belongs to the FPP/GGPP synthase family. Requires Mg(2+) as cofactor.

Its subcellular location is the cell membrane. The catalysed reaction is L-tryptophyl-[protein] + (2E,6E)-farnesyl diphosphate = (2S,3R)-3-farnesyl-2,3-dihydro-2,N(alpha)-cyclo-L-tryptophyl-[protein] + diphosphate. Functionally, part of a major quorum-sensing system that regulates the development of genetic competence. Involved in the maturation of the competence pheromone ComX. Acts by catalyzing the transfer of a farnesyl group on the ComX pheromone. Shows weak geranylation activity with geranyl diphosphate (GPP). The polypeptide is Tryptophan prenyltransferase ComQ (Bacillus subtilis (strain 168)).